The chain runs to 238 residues: Ribonuclease PH (238 aa).

Phosphate contacts are provided by residues arginine 86 and 124-126 (GTR).

The protein belongs to the RNase PH family. In terms of assembly, homohexameric ring arranged as a trimer of dimers.

It catalyses the reaction tRNA(n+1) + phosphate = tRNA(n) + a ribonucleoside 5'-diphosphate. Phosphorolytic 3'-5' exoribonuclease that plays an important role in tRNA 3'-end maturation. Removes nucleotide residues following the 3'-CCA terminus of tRNAs; can also add nucleotides to the ends of RNA molecules by using nucleoside diphosphates as substrates, but this may not be physiologically important. Probably plays a role in initiation of 16S rRNA degradation (leading to ribosome degradation) during starvation. This Solibacter usitatus (strain Ellin6076) protein is Ribonuclease PH.